The sequence spans 388 residues: Succinate--CoA ligase [ADP-forming] subunit beta (388 aa).

One can recognise an ATP-grasp domain in the interval 9–244 (KQLFARYGLP…QSQEDPREAQ (236 aa)). ATP-binding positions include Lys46, 53–55 (GRG), Glu99, Thr102, and Glu107. Residues Asn199 and Asp213 each contribute to the Mg(2+) site. Substrate-binding positions include Asn264 and 321-323 (GIV).

This sequence belongs to the succinate/malate CoA ligase beta subunit family. In terms of assembly, heterotetramer of two alpha and two beta subunits. Mg(2+) is required as a cofactor.

The catalysed reaction is succinate + ATP + CoA = succinyl-CoA + ADP + phosphate. It carries out the reaction GTP + succinate + CoA = succinyl-CoA + GDP + phosphate. It participates in carbohydrate metabolism; tricarboxylic acid cycle; succinate from succinyl-CoA (ligase route): step 1/1. Functionally, succinyl-CoA synthetase functions in the citric acid cycle (TCA), coupling the hydrolysis of succinyl-CoA to the synthesis of either ATP or GTP and thus represents the only step of substrate-level phosphorylation in the TCA. The beta subunit provides nucleotide specificity of the enzyme and binds the substrate succinate, while the binding sites for coenzyme A and phosphate are found in the alpha subunit. In Shigella dysenteriae serotype 1 (strain Sd197), this protein is Succinate--CoA ligase [ADP-forming] subunit beta.